The primary structure comprises 459 residues: Cysteine--tRNA ligase (459 aa).

Position 27 (Cys27) interacts with Zn(2+). The 'HIGH' region motif lies at 29–39; sequence PTVYDDAHLGH. Zn(2+) is bound by residues Cys202, His231, and Glu235. The 'KMSKS' region motif lies at 263–267; that stretch reads KMSKS. Position 266 (Lys266) interacts with ATP.

It belongs to the class-I aminoacyl-tRNA synthetase family. As to quaternary structure, monomer. The cofactor is Zn(2+).

It is found in the cytoplasm. It carries out the reaction tRNA(Cys) + L-cysteine + ATP = L-cysteinyl-tRNA(Cys) + AMP + diphosphate. In Campylobacter fetus subsp. fetus (strain 82-40), this protein is Cysteine--tRNA ligase.